The primary structure comprises 547 residues: MRQKRKGDLSPAELMMLTIGDVIKQLVEAHEQGKDVDLNKMKTKTAAKYGLASQPRLVDIIAAVPPHYRKILIPKLKAKPVRTASGIAVVAVMCKPHRCPHISFTGNICIYCPGGPDSDFEYSTQSYTGYEPTSMRAIRARYDPFLQTRHRIEQLKQLGHSVDKVEFIVMGGTFMALPEEYRDYFIRSLHDALSGHTSNNIHEAIKYSERSFTKCVGITIETRPDYCMKRHLSDMLTYGCTRLEIGVQSVYEDVARDTNRGHTVKAACESFHLAKDSGFKVVTHMMPDLPNVGLERDIEQFIEFFENPAFRPDGLKLYPTLVIRGTGLYELWKSGRYRSYSPSDLIELVARILALVPPWTRVYRVQRDIPMPLVSSGVEHGNLRELAFARMKDLGIQCRDVRTREVGIQEIHHRVRPYQVELVRRDYVANGGWETFLSYEDPDQDILIGLLRLRKCSEETFRFELGGGVSIVRELHVYGSVVPVSSRDPTKFQHQGFGMLLMEEAERIAREEHGSGKMAVISGVGTRNYYRKIGYRLQGPYMVKMLK.

The 291-residue stretch at 82–372 (RTASGIAVVA…YRVQRDIPMP (291 aa)) folds into the Radical SAM core domain. [4Fe-4S] cluster is bound by residues cysteine 99, cysteine 109, and cysteine 112. Serine 161 is modified (phosphoserine). Lysine 164 is an acetyl-CoA binding site. Lysine 229 carries the N6-methyllysine modification. Tyrosine 251 carries the phosphotyrosine modification. The N-acetyltransferase domain maps to 396–547 (IQCRDVRTRE…QGPYMVKMLK (152 aa)). Acetyl-CoA-binding positions include 474–477 (ELHV), 497–499 (FGM), and tyrosine 530.

It belongs to the ELP3 family. Component of the elongator complex which consists of ELP1, ELP2, ELP3, ELP4, ELP5 and ELP6. ELP1, ELP2 and ELP3 form the elongator core complex. Interacts with alpha-tubulin. [4Fe-4S] cluster is required as a cofactor. In terms of processing, tyrosine-phosphorylated. Also serine/threonine-phosphorylated.

The protein resides in the cytoplasm. It is found in the nucleus. It carries out the reaction uridine(34) in tRNA + acetyl-CoA + S-adenosyl-L-methionine + H2O = 5-(carboxymethyl)uridine(34) in tRNA + 5'-deoxyadenosine + L-methionine + CoA + 2 H(+). The protein operates within tRNA modification; 5-methoxycarbonylmethyl-2-thiouridine-tRNA biosynthesis. Its function is as follows. Catalytic tRNA acetyltransferase subunit of the elongator complex which is required for multiple tRNA modifications, including mcm5U (5-methoxycarbonylmethyl uridine), mcm5s2U (5-methoxycarbonylmethyl-2-thiouridine), and ncm5U (5-carbamoylmethyl uridine). In the elongator complex, acts as a tRNA uridine(34) acetyltransferase by mediating formation of carboxymethyluridine in the wobble base at position 34 in tRNAs. May also act as a protein lysine acetyltransferase by mediating acetylation of target proteins; such activity is however unclear in vivo and recent evidences suggest that ELP3 primarily acts as a tRNA acetyltransferase. Involved in neurogenesis: regulates the migration and branching of projection neurons in the developing cerebral cortex, through a process depending on alpha-tubulin acetylation. Required for acetylation of GJA1 in the developing cerebral cortex. The protein is Elongator complex protein 3 of Mus musculus (Mouse).